The sequence spans 767 residues: Photosystem I P700 chlorophyll a apoprotein A1 (767 aa).

8 helical membrane passes run 72–95, 158–181, 197–221, 305–323, 364–387, 403–429, 451–473, and 548–566; these read IFSA…FHGA, LMSL…FHYH, LNHH…HVSL, IAHH…GHMY, WHAQ…QHMY, IGLF…IAMI, ALIS…LYIH, and FMVH…LILL. C590 and C599 together coordinate [4Fe-4S] cluster. 2 helical membrane-spanning segments follow: residues 606–627 and 681–703; these read HVFL…HFSW and TSAY…MFLF. H692 serves as a coordination point for chlorophyll a'. M700 and Y708 together coordinate chlorophyll a. W709 serves as a coordination point for phylloquinone. A helical transmembrane segment spans residues 741–761; the sequence is AVGVAHYLLGGIATTWAFFHA.

It belongs to the PsaA/PsaB family. As to quaternary structure, the PsaA/B heterodimer binds the P700 chlorophyll special pair and subsequent electron acceptors. PSI consists of a core antenna complex that captures photons, and an electron transfer chain that converts photonic excitation into a charge separation. The cyanobacterial PSI reaction center is composed of one copy each of PsaA,B,C,D,E,F,I,J,K,L,M and X, and forms trimeric complexes. PSI electron transfer chain: 5 chlorophyll a, 1 chlorophyll a', 2 phylloquinones and 3 4Fe-4S clusters. PSI core antenna: 90 chlorophyll a, 22 carotenoids, 3 phospholipids and 1 galactolipid. P700 is a chlorophyll a/chlorophyll a' dimer, A0 is one or more chlorophyll a, A1 is one or both phylloquinones and FX is a shared 4Fe-4S iron-sulfur center. is required as a cofactor.

The protein resides in the cellular thylakoid membrane. The enzyme catalyses reduced [plastocyanin] + hnu + oxidized [2Fe-2S]-[ferredoxin] = oxidized [plastocyanin] + reduced [2Fe-2S]-[ferredoxin]. Functionally, psaA and PsaB bind P700, the primary electron donor of photosystem I (PSI), as well as the electron acceptors A0, A1 and FX. PSI is a plastocyanin/cytochrome c6-ferredoxin oxidoreductase, converting photonic excitation into a charge separation, which transfers an electron from the donor P700 chlorophyll pair to the spectroscopically characterized acceptors A0, A1, FX, FA and FB in turn. Oxidized P700 is reduced on the lumenal side of the thylakoid membrane by plastocyanin or cytochrome c6. The sequence is that of Photosystem I P700 chlorophyll a apoprotein A1 from Synechococcus sp. (strain WH7803).